The following is a 468-amino-acid chain: Uronate isomerase (468 aa).

It belongs to the metallo-dependent hydrolases superfamily. Uronate isomerase family.

The catalysed reaction is D-glucuronate = D-fructuronate. It catalyses the reaction aldehydo-D-galacturonate = keto-D-tagaturonate. The protein operates within carbohydrate metabolism; pentose and glucuronate interconversion. The polypeptide is Uronate isomerase (Marinomonas sp. (strain MWYL1)).